The chain runs to 143 residues: D-aminoacyl-tRNA deacylase (143 aa).

The Gly-cisPro motif, important for rejection of L-amino acids motif lies at 135 to 136 (GP).

Belongs to the DTD family. In terms of assembly, homodimer.

It is found in the cytoplasm. It carries out the reaction glycyl-tRNA(Ala) + H2O = tRNA(Ala) + glycine + H(+). It catalyses the reaction a D-aminoacyl-tRNA + H2O = a tRNA + a D-alpha-amino acid + H(+). An aminoacyl-tRNA editing enzyme that deacylates mischarged D-aminoacyl-tRNAs. Also deacylates mischarged glycyl-tRNA(Ala), protecting cells against glycine mischarging by AlaRS. Acts via tRNA-based rather than protein-based catalysis; rejects L-amino acids rather than detecting D-amino acids in the active site. By recycling D-aminoacyl-tRNA to D-amino acids and free tRNA molecules, this enzyme counteracts the toxicity associated with the formation of D-aminoacyl-tRNA entities in vivo and helps enforce protein L-homochirality. The chain is D-aminoacyl-tRNA deacylase from Mycobacterium bovis (strain BCG / Pasteur 1173P2).